Here is a 317-residue protein sequence, read N- to C-terminus: METWQEVTVHVHRDAQEAVSHVLIETGSQGVAIADSADYIGQKDRFGELYPDVEQSDMIAITAYYPSSTNLADVIATINEQLAELASFGLQVGQVTVDSQELAEEDWADNWKKYYEPARITHDLTIVPSWTDYDASAGEKVIKLDPGMAFGTGTHPTTKMSLFALEQILRGGETVIDVGTGSGVLSIASSLLGAKTIYAYDLDDVAVRVAQENIDLNQGTDNIHVAAGDLLKGVSQEADVIVANILADILVLLTDDAYRLVKKEGYLILSGIISEKLDMVLEAAFSAGFFLETHMIQGEWNALVFKKTDDISGVIGG.

S-adenosyl-L-methionine is bound by residues threonine 158, glycine 179, aspartate 201, and asparagine 244.

Belongs to the methyltransferase superfamily. PrmA family.

It is found in the cytoplasm. The enzyme catalyses L-lysyl-[protein] + 3 S-adenosyl-L-methionine = N(6),N(6),N(6)-trimethyl-L-lysyl-[protein] + 3 S-adenosyl-L-homocysteine + 3 H(+). Methylates ribosomal protein L11. This Streptococcus pyogenes serotype M18 (strain MGAS8232) protein is Ribosomal protein L11 methyltransferase.